The following is a 549-amino-acid chain: CTP synthase (549 aa).

The amidoligase domain stretch occupies residues Met1–Leu272. Ser19 lines the CTP pocket. Residue Ser19 coordinates UTP. Residues Ser20–Leu25 and Asp77 each bind ATP. Mg(2+)-binding residues include Asp77 and Glu146. CTP is bound by residues Asp153–Glu155, Lys193–Gln198, and Lys229. UTP is bound by residues Lys193–Gln198 and Lys229. The region spanning Asn297–Gly548 is the Glutamine amidotransferase type-1 domain. Residue Gly360 participates in L-glutamine binding. The Nucleophile; for glutamine hydrolysis role is filled by Cys387. Residues Leu388–Gln391, Glu411, and Arg473 contribute to the L-glutamine site. Residues His521 and Glu523 contribute to the active site.

Belongs to the CTP synthase family. Homotetramer.

The enzyme catalyses UTP + L-glutamine + ATP + H2O = CTP + L-glutamate + ADP + phosphate + 2 H(+). The catalysed reaction is L-glutamine + H2O = L-glutamate + NH4(+). It carries out the reaction UTP + NH4(+) + ATP = CTP + ADP + phosphate + 2 H(+). It functions in the pathway pyrimidine metabolism; CTP biosynthesis via de novo pathway; CTP from UDP: step 2/2. With respect to regulation, allosterically activated by GTP, when glutamine is the substrate; GTP has no effect on the reaction when ammonia is the substrate. The allosteric effector GTP functions by stabilizing the protein conformation that binds the tetrahedral intermediate(s) formed during glutamine hydrolysis. Inhibited by the product CTP, via allosteric rather than competitive inhibition. Catalyzes the ATP-dependent amination of UTP to CTP with either L-glutamine or ammonia as the source of nitrogen. Regulates intracellular CTP levels through interactions with the four ribonucleotide triphosphates. This Streptomyces avermitilis (strain ATCC 31267 / DSM 46492 / JCM 5070 / NBRC 14893 / NCIMB 12804 / NRRL 8165 / MA-4680) protein is CTP synthase.